The sequence spans 156 residues: Ribosomal RNA large subunit methyltransferase H (156 aa).

S-adenosyl-L-methionine-binding positions include leucine 73, glycine 104, and 123 to 128 (ISSMTL).

Belongs to the RNA methyltransferase RlmH family. As to quaternary structure, homodimer.

It is found in the cytoplasm. It catalyses the reaction pseudouridine(1915) in 23S rRNA + S-adenosyl-L-methionine = N(3)-methylpseudouridine(1915) in 23S rRNA + S-adenosyl-L-homocysteine + H(+). Specifically methylates the pseudouridine at position 1915 (m3Psi1915) in 23S rRNA. This chain is Ribosomal RNA large subunit methyltransferase H, found in Burkholderia ambifaria (strain ATCC BAA-244 / DSM 16087 / CCUG 44356 / LMG 19182 / AMMD) (Burkholderia cepacia (strain AMMD)).